The sequence spans 70 residues: Mu-conotoxin-like Am3.4 (70 aa).

An N-terminal signal peptide occupies residues 1-20; it reads MMYKLGVLLIICLLLFPLTA. Residues 21-53 constitute a propeptide that is removed on maturation; sequence VPQDGDQPADRPAERMQDDISFEHDRFFDPVKR. 3 disulfide bridges follow: C54/C69, C55/C65, and C61/C68. Position 67 is a 4-hydroxyproline; partial; in major form (P67). A Cysteine amide modification is found at C69.

The protein belongs to the conotoxin M superfamily. Post-translationally, contains 3 disulfide bonds. As to expression, expressed by the venom duct.

It localises to the secreted. Functionally, mu-conotoxins block voltage-gated sodium channels (Nav). This is Mu-conotoxin-like Am3.4 from Conus amadis (Amadis cone).